A 519-amino-acid chain; its full sequence is Ribonuclease Y (519 aa).

A helical transmembrane segment spans residues 3–23; that stretch reads LLSLLLILLGIILGVVVGYIV. Residues 209-269 form the KH domain; it reads TVSVVNLPND…IRREIARTAL (61 aa). The HD domain maps to 335–428; sequence VLKHSIEVAH…VAAADALSAA (94 aa).

The protein belongs to the RNase Y family.

The protein localises to the cell membrane. Functionally, endoribonuclease that initiates mRNA decay. This Staphylococcus epidermidis (strain ATCC 35984 / DSM 28319 / BCRC 17069 / CCUG 31568 / BM 3577 / RP62A) protein is Ribonuclease Y.